The chain runs to 249 residues: MFYIVGIGPGPGYITERAIQILQEVECIFYEDYTGPLDVATLRRYARVEPVKLARRDLEDESGRKIFECLQEGKKAALVTAGDPMLATSHAALITLAKAKGYSVEVVPGVSIICAAFSASCLSIYKLGGVATVTYPRGGVYSVRPYELVEQNLARGLHTLLLLDIRDDGVFMSPRDAAEVLLTLEGRERRGVFTRDRRVVVVSKLGWGGSVLYAPLGEIVQSEMEGPAVFIVPAGLNPVERECIKTFSK.

S-adenosyl-L-methionine-binding positions include D83, L86, 111–112 (SI), L163, and L205.

This sequence belongs to the diphthine synthase family. As to quaternary structure, homodimer.

The enzyme catalyses 2-[(3S)-amino-3-carboxypropyl]-L-histidyl-[translation elongation factor 2] + 3 S-adenosyl-L-methionine = diphthine-[translation elongation factor 2] + 3 S-adenosyl-L-homocysteine + 3 H(+). It functions in the pathway protein modification; peptidyl-diphthamide biosynthesis. In terms of biological role, S-adenosyl-L-methionine-dependent methyltransferase that catalyzes the trimethylation of the amino group of the modified target histidine residue in translation elongation factor 2 (EF-2), to form an intermediate called diphthine. The three successive methylation reactions represent the second step of diphthamide biosynthesis. The sequence is that of Diphthine synthase from Pyrobaculum islandicum (strain DSM 4184 / JCM 9189 / GEO3).